The sequence spans 521 residues: Hyccin (521 aa).

Position 306 is a phosphothreonine (threonine 306). A Phosphoserine modification is found at serine 321. Positions 355 to 373 (AASSTSQSGLSNSSHNCSN) are enriched in low complexity. The tract at residues 355–413 (AASSTSQSGLSNSSHNCSNKTSVGKNQRRSGGSKAGAKERETAGESCRDHFARKQTQRA) is disordered. Residues 390 to 406 (GAKERETAGESCRDHFA) are compositionally biased toward basic and acidic residues. Residues serine 415, serine 422, serine 433, serine 453, and serine 465 each carry the phosphoserine modification.

This sequence belongs to the Hyccin family. As to quaternary structure, component of a phosphatidylinositol 4-kinase (PI4K) complex, composed of PI4KA, EFR3 (EFR3A or EFR3B), TTC7 (TTC7A or TTC7B) and HYCC (HYCC1 or HYCC2). Interacts with TTC7 (TTC7A or TTC7B), interaction is direct. As to expression, predominantly expressed in the central nervous system, where it is found in neurons but not in myelinating cells. Lower abundance is observed in peripheral neurons, where it is detectable only at early postnatal ages. Expressed in both oligodendrocytes and neurons.

The protein resides in the cytoplasm. It is found in the cytosol. Its subcellular location is the cell membrane. Functionally, component of a complex required to localize phosphatidylinositol 4-kinase (PI4K) to the plasma membrane. The complex acts as a regulator of phosphatidylinositol 4-phosphate (PtdIns(4)P) synthesis. HYCC1 plays a key role in oligodendrocytes formation, a cell type with expanded plasma membrane that requires generation of PtdIns(4)P. Its role in oligodendrocytes formation probably explains its importance in myelination of the central and peripheral nervous system. May also have a role in the beta-catenin/Lef signaling pathway. This chain is Hyccin (Hycc1), found in Mus musculus (Mouse).